The following is a 331-amino-acid chain: Centriolar satellite-associated tubulin polyglutamylase complex regulator 1 (331 aa).

Residues 1 to 111 (MLSPERLALP…HCLLQLLCPD (111 aa)) form a required for interaction with PCM1 region. The required for interaction with TPGS1, LRRC49, and TTLL1 stretch occupies residues 1-225 (MLSPERLALP…SCPPPALVKE (225 aa)). The tract at residues 112–331 (FPLELTQKAA…STEETDESET (220 aa)) is required for interaction with TPGS2. The segment at 292 to 331 (SCLPSRTPPRVGSPWKPLHRSRKLDAESDGSTEETDESET) is disordered. The span at 318-331 (ESDGSTEETDESET) shows a compositional bias: acidic residues. Residue S319 is modified to Phosphoserine.

This sequence belongs to the CSTPP1 family. In terms of assembly, interacts with PCM1. Interacts with TTLL1, TPGS1, TPGS2 and LRRC49; the interactions link CSTPP1 to the complex TPGC. Binds to alpha-tubulin.

It localises to the cytoplasm. Its subcellular location is the cytoskeleton. The protein localises to the microtubule organizing center. It is found in the centrosome. The protein resides in the centriolar satellite. Its function is as follows. Regulator of the tubulin polyglutamylase complex (TPGC) that controls cytoskeletal organization, nuclear shape, and cilium disassembly by balancing microtubule and actin assembly. Regulates the assembly and stability of the TPGC and thereby modulates polyglutamylation of the microtubule, which antagonizes MAP4 binding. The chain is Centriolar satellite-associated tubulin polyglutamylase complex regulator 1 from Mus musculus (Mouse).